Consider the following 327-residue polypeptide: MIFPSHDSQAFTSVDMEVGNCTILTEFILLGFSADSQWQPILFGVFLMLYLITLSGNMTLVILIRTDSHLHTPMYFFIGNLSFLDFWYTSVYTPKILASCVSEDKRISLAGCGAQLFFSCVVAYTECYLLAAMAYDRHAAICNPLLYSGTMSTALCTGLVAGSYIGGFLNAIAHTANTFRLHFCGKNIIDHFFCDAPPLVKMSCTNTRVYEKVLLGVVGFTVLSSILAILISYVNILLAILRIHSASGRHKAFSTCASHLISVMLFYGSLLFMYSRPSSTYSLERDKVAALFYTVINPLLNPLIYSLRNKDIKEAFRKATQTIQPQT.

Over 1–43 (MIFPSHDSQAFTSVDMEVGNCTILTEFILLGFSADSQWQPILF) the chain is Extracellular. An N-linked (GlcNAc...) asparagine glycan is attached at asparagine 20. The helical transmembrane segment at 44-64 (GVFLMLYLITLSGNMTLVILI) threads the bilayer. The Cytoplasmic segment spans residues 65-71 (RTDSHLH). Residues 72 to 92 (TPMYFFIGNLSFLDFWYTSVY) form a helical membrane-spanning segment. The Extracellular segment spans residues 93 to 113 (TPKILASCVSEDKRISLAGCG). A disulfide bond links cysteine 112 and cysteine 194. The helical transmembrane segment at 114–134 (AQLFFSCVVAYTECYLLAAMA) threads the bilayer. The Cytoplasmic segment spans residues 135-152 (YDRHAAICNPLLYSGTMS). Residues 153–173 (TALCTGLVAGSYIGGFLNAIA) form a helical membrane-spanning segment. At 174 to 212 (HTANTFRLHFCGKNIIDHFFCDAPPLVKMSCTNTRVYEK) the chain is on the extracellular side. Residues 213-233 (VLLGVVGFTVLSSILAILISY) traverse the membrane as a helical segment. Over 234-252 (VNILLAILRIHSASGRHKA) the chain is Cytoplasmic. Residues 253–273 (FSTCASHLISVMLFYGSLLFM) form a helical membrane-spanning segment. At 274-286 (YSRPSSTYSLERD) the chain is on the extracellular side. A helical transmembrane segment spans residues 287–307 (KVAALFYTVINPLLNPLIYSL). The Cytoplasmic portion of the chain corresponds to 308–327 (RNKDIKEAFRKATQTIQPQT).

This sequence belongs to the G-protein coupled receptor 1 family.

Its subcellular location is the cell membrane. In terms of biological role, odorant receptor. The polypeptide is Olfactory receptor 9G4 (OR9G4) (Homo sapiens (Human)).